The primary structure comprises 121 residues: Small ribosomal subunit protein bS6m (121 aa).

Belongs to the bacterial ribosomal protein bS6 family. As to quaternary structure, component of the mitochondrial ribosome small subunit (28S) which comprises a 12S rRNA and about 30 distinct proteins.

The protein resides in the mitochondrion. The protein is Small ribosomal subunit protein bS6m (MRPS6) of Gallus gallus (Chicken).